A 253-amino-acid polypeptide reads, in one-letter code: MGTILDKIVNQKKKEVAALYETYTPVKEKRKTRSLVKALEQFTVIAEVKRASPSKGDINLHVDVRKQVKTYEECGAGAVSVLTDGQFFKGSFYDLQTAREESSIPLLCKDFIIDKIQIDRAYEAGADIILLIVAALTKEKLKELYSYVLEKGLEAIVEVHDEQELEIAIQLNPHVIGINNRNLKTFEVDLSQTEKLGKRLNEEKLLWISESGIHSKEDIIRVKRAGAKGVLVGEALMTSSSIHTFFEDCKVNI.

The protein belongs to the TrpC family.

The catalysed reaction is 1-(2-carboxyphenylamino)-1-deoxy-D-ribulose 5-phosphate + H(+) = (1S,2R)-1-C-(indol-3-yl)glycerol 3-phosphate + CO2 + H2O. Its pathway is amino-acid biosynthesis; L-tryptophan biosynthesis; L-tryptophan from chorismate: step 4/5. The polypeptide is Indole-3-glycerol phosphate synthase (Bacillus anthracis (strain A0248)).